Here is a 518-residue protein sequence, read N- to C-terminus: Bifunctional purine biosynthesis protein PurH (518 aa).

The region spanning 1–144 (MNRRAVLSVS…KNQERVSIVV (144 aa)) is the MGS-like domain.

This sequence belongs to the PurH family.

The enzyme catalyses (6R)-10-formyltetrahydrofolate + 5-amino-1-(5-phospho-beta-D-ribosyl)imidazole-4-carboxamide = 5-formamido-1-(5-phospho-D-ribosyl)imidazole-4-carboxamide + (6S)-5,6,7,8-tetrahydrofolate. It carries out the reaction IMP + H2O = 5-formamido-1-(5-phospho-D-ribosyl)imidazole-4-carboxamide. Its pathway is purine metabolism; IMP biosynthesis via de novo pathway; 5-formamido-1-(5-phospho-D-ribosyl)imidazole-4-carboxamide from 5-amino-1-(5-phospho-D-ribosyl)imidazole-4-carboxamide (10-formyl THF route): step 1/1. It functions in the pathway purine metabolism; IMP biosynthesis via de novo pathway; IMP from 5-formamido-1-(5-phospho-D-ribosyl)imidazole-4-carboxamide: step 1/1. This chain is Bifunctional purine biosynthesis protein PurH, found in Desulfitobacterium hafniense (strain DSM 10664 / DCB-2).